An 803-amino-acid chain; its full sequence is Protein translocase subunit SecA (803 aa).

ATP is bound by residues Q100, G118–T122, and D508.

This sequence belongs to the SecA family. In terms of assembly, monomer and homodimer. Part of the essential Sec protein translocation apparatus which comprises SecA, SecYEG and auxiliary proteins SecDF. Other proteins may also be involved.

It localises to the cell membrane. The protein resides in the cytoplasm. The catalysed reaction is ATP + H2O + cellular proteinSide 1 = ADP + phosphate + cellular proteinSide 2.. In terms of biological role, part of the Sec protein translocase complex. Interacts with the SecYEG preprotein conducting channel. Has a central role in coupling the hydrolysis of ATP to the transfer of proteins into and across the cell membrane, serving as an ATP-driven molecular motor driving the stepwise translocation of polypeptide chains across the membrane. This Leuconostoc mesenteroides subsp. mesenteroides (strain ATCC 8293 / DSM 20343 / BCRC 11652 / CCM 1803 / JCM 6124 / NCDO 523 / NBRC 100496 / NCIMB 8023 / NCTC 12954 / NRRL B-1118 / 37Y) protein is Protein translocase subunit SecA.